We begin with the raw amino-acid sequence, 402 residues long: Putative cytochrome P450 133B1 (402 aa).

Position 348 (cysteine 348) interacts with heme.

Belongs to the cytochrome P450 family. Heme is required as a cofactor.

This Xylella fastidiosa (strain 9a5c) protein is Putative cytochrome P450 133B1 (cyp133B1).